Consider the following 249-residue polypeptide: tRNA (guanine-N(1)-)-methyltransferase (249 aa).

Residues Gly-113 and 133–138 (IGDFVL) each bind S-adenosyl-L-methionine.

This sequence belongs to the RNA methyltransferase TrmD family. As to quaternary structure, homodimer.

The protein localises to the cytoplasm. It carries out the reaction guanosine(37) in tRNA + S-adenosyl-L-methionine = N(1)-methylguanosine(37) in tRNA + S-adenosyl-L-homocysteine + H(+). Functionally, specifically methylates guanosine-37 in various tRNAs. The polypeptide is tRNA (guanine-N(1)-)-methyltransferase (Aliivibrio fischeri (strain ATCC 700601 / ES114) (Vibrio fischeri)).